Reading from the N-terminus, the 509-residue chain is Subtelomeric hrmA-associated cluster protein AFUB_078990 (509 aa).

In terms of biological role, part of the subtelomeric hrmA-associated cluster (HAC) containing genes that alter the hyphal surface (such as reduced total chitin or increased beta-glucan exposure) and perturb inter-hyphal interactions within the developing biofilms, resulting in a loss of vertically aligned polarized growing filaments. Consequently, this hypoxia-typic morphotype (called H-MORPH) with altered biofilm architecture leads to increased hypoxia fitness, increased host inflammation, rapid disease progression, and mortality in a murine model of invasive aspergillosis. In Aspergillus fumigatus (strain CBS 144.89 / FGSC A1163 / CEA10) (Neosartorya fumigata), this protein is Subtelomeric hrmA-associated cluster protein AFUB_078990.